A 473-amino-acid polypeptide reads, in one-letter code: Photosystem II CP43 reaction center protein (473 aa).

A propeptide spanning residues 1–14 (MKTLYSLRRFYPVE) is cleaved from the precursor. N-acetylthreonine is present on Thr-15. Thr-15 is modified (phosphothreonine). 5 consecutive transmembrane segments (helical) span residues 69-93 (LFEV…PHLA), 134-155 (LLGP…KDRN), 178-200 (KALY…RRIT), 255-275 (KPFA…LSYS), and 291-312 (WFNN…ASQA). A [CaMn4O5] cluster-binding site is contributed by Glu-367. Residues 447–471 (RARAAAAGFEKGIDRDFEPVLSMTP) traverse the membrane as a helical segment.

The protein belongs to the PsbB/PsbC family. PsbC subfamily. PSII is composed of 1 copy each of membrane proteins PsbA, PsbB, PsbC, PsbD, PsbE, PsbF, PsbH, PsbI, PsbJ, PsbK, PsbL, PsbM, PsbT, PsbX, PsbY, PsbZ, Psb30/Ycf12, at least 3 peripheral proteins of the oxygen-evolving complex and a large number of cofactors. It forms dimeric complexes. Binds multiple chlorophylls and provides some of the ligands for the Ca-4Mn-5O cluster of the oxygen-evolving complex. It may also provide a ligand for a Cl- that is required for oxygen evolution. PSII binds additional chlorophylls, carotenoids and specific lipids. serves as cofactor.

The protein localises to the plastid. It localises to the chloroplast thylakoid membrane. In terms of biological role, one of the components of the core complex of photosystem II (PSII). It binds chlorophyll and helps catalyze the primary light-induced photochemical processes of PSII. PSII is a light-driven water:plastoquinone oxidoreductase, using light energy to abstract electrons from H(2)O, generating O(2) and a proton gradient subsequently used for ATP formation. The protein is Photosystem II CP43 reaction center protein of Illicium oligandrum (Star anise).